The following is a 551-amino-acid chain: Glucans biosynthesis protein D (551 aa).

Residues 1 to 32 (MDRRRFIKGSMAMAAVCGTSGIASLFSQAAFA) constitute a signal peptide (tat-type signal).

This sequence belongs to the OpgD/OpgG family. Predicted to be exported by the Tat system. The position of the signal peptide cleavage has not been experimentally proven.

The protein resides in the periplasm. The protein operates within glycan metabolism; osmoregulated periplasmic glucan (OPG) biosynthesis. Functionally, probably involved in the control of the structural glucose backbone of osmoregulated periplasmic glucans (OPGs). The polypeptide is Glucans biosynthesis protein D (mdoD) (Shigella flexneri).